A 282-amino-acid chain; its full sequence is Extent of cell elongation protein 1 (282 aa).

The signal sequence occupies residues methionine 1 to alanine 18. The helical transmembrane segment at isoleucine 68 to isoleucine 92 threads the bilayer.

The protein resides in the secreted. The protein localises to the host cell membrane. In terms of biological role, secreted protein cleaved by KEX2 in 8 similar peptides (ECE1-I to ECE1-VIII). Stimulates biofilm formation. Acts as a cytolytic peptide toxin that directly damages host epithelial membranes, triggers a danger response signaling pathway and activates epithelial immunity. Probably acts similarly to cationic antimicrobial peptide toxins, inducing lesions after binding to target cell membranes and causing an inward current associated with calcium influx. The protein is Extent of cell elongation protein 1 of Candida tropicalis (strain ATCC MYA-3404 / T1) (Yeast).